A 382-amino-acid chain; its full sequence is Dual-specificity RNA methyltransferase RlmN (382 aa).

Glu96 serves as the catalytic Proton acceptor. One can recognise a Radical SAM core domain in the interval 102–342 (QGKRGTLCVS…VRTTRGEDID (241 aa)). Cysteines 109 and 345 form a disulfide. [4Fe-4S] cluster-binding residues include Cys116, Cys120, and Cys123. Residues 170 to 171 (GE), Ser202, 224 to 226 (SLH), and Asn302 contribute to the S-adenosyl-L-methionine site. Cys345 acts as the S-methylcysteine intermediate in catalysis.

This sequence belongs to the radical SAM superfamily. RlmN family. [4Fe-4S] cluster serves as cofactor.

It localises to the cytoplasm. The catalysed reaction is adenosine(2503) in 23S rRNA + 2 reduced [2Fe-2S]-[ferredoxin] + 2 S-adenosyl-L-methionine = 2-methyladenosine(2503) in 23S rRNA + 5'-deoxyadenosine + L-methionine + 2 oxidized [2Fe-2S]-[ferredoxin] + S-adenosyl-L-homocysteine. The enzyme catalyses adenosine(37) in tRNA + 2 reduced [2Fe-2S]-[ferredoxin] + 2 S-adenosyl-L-methionine = 2-methyladenosine(37) in tRNA + 5'-deoxyadenosine + L-methionine + 2 oxidized [2Fe-2S]-[ferredoxin] + S-adenosyl-L-homocysteine. Its function is as follows. Specifically methylates position 2 of adenine 2503 in 23S rRNA and position 2 of adenine 37 in tRNAs. m2A2503 modification seems to play a crucial role in the proofreading step occurring at the peptidyl transferase center and thus would serve to optimize ribosomal fidelity. The chain is Dual-specificity RNA methyltransferase RlmN from Pseudomonas fluorescens (strain Pf0-1).